The primary structure comprises 269 residues: tRNA pseudouridine synthase A (269 aa).

Asp55 serves as the catalytic Nucleophile. Tyr111 is a binding site for substrate.

It belongs to the tRNA pseudouridine synthase TruA family.

The enzyme catalyses uridine(38/39/40) in tRNA = pseudouridine(38/39/40) in tRNA. In terms of biological role, formation of pseudouridine at positions 38, 39 and 40 in the anticodon stem and loop of transfer RNAs. The sequence is that of tRNA pseudouridine synthase A from Methanosarcina mazei (strain ATCC BAA-159 / DSM 3647 / Goe1 / Go1 / JCM 11833 / OCM 88) (Methanosarcina frisia).